We begin with the raw amino-acid sequence, 205 residues long: Dihydrofolate reductase (205 aa).

The region spanning 1–201 is the DHFR domain; that stretch reads MLALVVALAS…TSFKMFLYTK (201 aa). Residues alanine 7 and 13–19 each bind NADP(+); that span reads GIGNANA. Substrate is bound at residue 29–34; sequence DMAWFR. NADP(+) is bound at residue 62-64; sequence RRT. Residue arginine 78 participates in substrate binding. Residues 84-86 and 118-125 contribute to the NADP(+) site; these read SRG and GGRDVYSL.

It belongs to the dihydrofolate reductase family.

The catalysed reaction is (6S)-5,6,7,8-tetrahydrofolate + NADP(+) = 7,8-dihydrofolate + NADPH + H(+). The protein operates within cofactor biosynthesis; tetrahydrofolate biosynthesis; 5,6,7,8-tetrahydrofolate from 7,8-dihydrofolate: step 1/1. In terms of biological role, key enzyme in folate metabolism. Catalyzes an essential reaction for de novo glycine and purine synthesis, and for DNA precursor synthesis. This chain is Dihydrofolate reductase (DHFR-1), found in Encephalitozoon cuniculi (strain GB-M1) (Microsporidian parasite).